The sequence spans 410 residues: LL-diaminopimelate aminotransferase (410 aa).

Substrate is bound by residues Y15 and G42. Pyridoxal 5'-phosphate is bound by residues Y72, 108–109, Y132, N187, Y218, and 246–248; these read SK and SFS. The substrate site is built by K109, Y132, and N187. The residue at position 249 (K249) is an N6-(pyridoxal phosphate)lysine. R257 and N292 together coordinate pyridoxal 5'-phosphate. Positions 292 and 388 each coordinate substrate.

This sequence belongs to the class-I pyridoxal-phosphate-dependent aminotransferase family. LL-diaminopimelate aminotransferase subfamily. As to quaternary structure, homodimer. Pyridoxal 5'-phosphate is required as a cofactor.

The catalysed reaction is (2S,6S)-2,6-diaminopimelate + 2-oxoglutarate = (S)-2,3,4,5-tetrahydrodipicolinate + L-glutamate + H2O + H(+). It functions in the pathway amino-acid biosynthesis; L-lysine biosynthesis via DAP pathway; LL-2,6-diaminopimelate from (S)-tetrahydrodipicolinate (aminotransferase route): step 1/1. In terms of biological role, involved in the synthesis of meso-diaminopimelate (m-DAP or DL-DAP), required for both lysine and peptidoglycan biosynthesis. Catalyzes the direct conversion of tetrahydrodipicolinate to LL-diaminopimelate. This Geobacter metallireducens (strain ATCC 53774 / DSM 7210 / GS-15) protein is LL-diaminopimelate aminotransferase.